We begin with the raw amino-acid sequence, 101 residues long: Small ribosomal subunit protein uS10 (101 aa).

It belongs to the universal ribosomal protein uS10 family. In terms of assembly, part of the 30S ribosomal subunit.

Functionally, involved in the binding of tRNA to the ribosomes. This is Small ribosomal subunit protein uS10 from Flavobacterium johnsoniae (strain ATCC 17061 / DSM 2064 / JCM 8514 / BCRC 14874 / CCUG 350202 / NBRC 14942 / NCIMB 11054 / UW101) (Cytophaga johnsonae).